We begin with the raw amino-acid sequence, 59 residues long: UPF0337 protein PP_4561 (59 aa).

Basic and acidic residues predominate over residues 27 to 43 (TDNEKLRAEGKAQELKG). Positions 27–59 (TDNEKLRAEGKAQELKGEAQQVKGNVKDAVKKP) are disordered.

The protein belongs to the UPF0337 (CsbD) family.

The polypeptide is UPF0337 protein PP_4561 (Pseudomonas putida (strain ATCC 47054 / DSM 6125 / CFBP 8728 / NCIMB 11950 / KT2440)).